A 101-amino-acid chain; its full sequence is Precursor of CEP6 (101 aa).

The signal sequence occupies residues 1 to 26 (MKLSVYIILSILFISTVFYEIQFTEA). Residues 27 to 48 (RQLRKTDDQDHDDHHFTVGYTD) constitute a propeptide that is removed on maturation. The span at 29–42 (LRKTDDQDHDDHHF) shows a compositional bias: basic and acidic residues. Positions 29 to 101 (LRKTDDQDHD…HAVKNNEPNA (73 aa)) are disordered. 3 positions are modified to hydroxyproline: P52, P55, and P59. A propeptide spanning residues 64–77 (KMKENEENAGGYKD) is cleaved from the precursor. Basic and acidic residues predominate over residues 64–79 (KMKENEENAGGYKDDF). A hydroxyproline mark is found at P81, P84, and P88. A propeptide spanning residues 93-101 (AVKNNEPNA) is cleaved from the precursor.

The protein belongs to the C-terminally encoded plant signaling peptide (CEP) family. As to quaternary structure, interacts with CEP receptors (e.g. CEPR1 and CEPR2). The mature small signaling peptide is generated by proteolytic processing of the longer precursor. As to expression, expressed in lateral root primordia and in lateral roots excluding the meristem region. Also present in the aerial tissues, such as leaf petioles and the shoot apex region.

Its subcellular location is the secreted. It localises to the extracellular space. The protein resides in the apoplast. Extracellular signaling peptide that represses primary root growth rate. Modulates leaf morphology. Regulates systemic nitrogen (N)-demand signaling. Mediates up-regulation of genes involved in N uptake and assimilation pathways. The polypeptide is Precursor of CEP6 (Arabidopsis thaliana (Mouse-ear cress)).